We begin with the raw amino-acid sequence, 297 residues long: 4-hydroxy-tetrahydrodipicolinate synthase (297 aa).

Residue Thr-46 participates in pyruvate binding. The active-site Proton donor/acceptor is the Tyr-134. Lys-162 serves as the catalytic Schiff-base intermediate with substrate. Ile-204 is a binding site for pyruvate.

The protein belongs to the DapA family. As to quaternary structure, homotetramer; dimer of dimers.

Its subcellular location is the cytoplasm. The catalysed reaction is L-aspartate 4-semialdehyde + pyruvate = (2S,4S)-4-hydroxy-2,3,4,5-tetrahydrodipicolinate + H2O + H(+). Its pathway is amino-acid biosynthesis; L-lysine biosynthesis via DAP pathway; (S)-tetrahydrodipicolinate from L-aspartate: step 3/4. In terms of biological role, catalyzes the condensation of (S)-aspartate-beta-semialdehyde [(S)-ASA] and pyruvate to 4-hydroxy-tetrahydrodipicolinate (HTPA). In Stenotrophomonas maltophilia (strain R551-3), this protein is 4-hydroxy-tetrahydrodipicolinate synthase.